Reading from the N-terminus, the 315-residue chain is Voltage-dependent calcium channel gamma-3 subunit (315 aa).

Transmembrane regions (helical) follow at residues 8–28 (IQMLITTVGAFAAFSLMTIAV), 104–124 (SSVFPILSVTLLFFGGLCVAA), 135–155 (ILSAGIFFVSAGLSNIIGIIV), and 181–201 (FGAFSFIIAEIVGVVAVHIYI). The residue at position 248 (Ser-248) is a Phosphoserine.

It belongs to the PMP-22/EMP/MP20 family. CACNG subfamily. In terms of assembly, the L-type calcium channel is composed of five subunits: alpha-1, alpha-2/delta, beta and gamma. Acts as an auxiliary subunit for AMPA-selective glutamate receptors (AMPARs). Found in a complex with GRIA1, GRIA2, GRIA3, GRIA4, CNIH2, CNIH3, CACNG2, CACNG4, CACNG5, CACNG7 and CACNG8. Interacts with AP4M1 and GRIA1; associates GRIA1 with the adaptor protein complex 4 (AP-4) to target GRIA1 to the somatodendritic compartment of neurons.

The protein localises to the membrane. Functionally, regulates the trafficking to the somatodendritic compartment and gating properties of AMPA-selective glutamate receptors (AMPARs). Promotes their targeting to the cell membrane and synapses and modulates their gating properties by slowing their rates of activation, deactivation and desensitization. Does not show subunit-specific AMPA receptor regulation and regulates all AMPAR subunits. Thought to stabilize the calcium channel in an inactivated (closed) state. The sequence is that of Voltage-dependent calcium channel gamma-3 subunit (CACNG3) from Homo sapiens (Human).